The chain runs to 557 residues: Dihydroxy-acid dehydratase (557 aa).

A Mg(2+)-binding site is contributed by Asp78. Residue Cys119 participates in [2Fe-2S] cluster binding. Asp120 and Lys121 together coordinate Mg(2+). Lys121 is subject to N6-carboxylysine. Residue Cys192 coordinates [2Fe-2S] cluster. Glu442 serves as a coordination point for Mg(2+). Residue Ser468 is the Proton acceptor of the active site.

This sequence belongs to the IlvD/Edd family. In terms of assembly, homodimer. [2Fe-2S] cluster serves as cofactor. Requires Mg(2+) as cofactor.

It catalyses the reaction (2R)-2,3-dihydroxy-3-methylbutanoate = 3-methyl-2-oxobutanoate + H2O. The enzyme catalyses (2R,3R)-2,3-dihydroxy-3-methylpentanoate = (S)-3-methyl-2-oxopentanoate + H2O. The protein operates within amino-acid biosynthesis; L-isoleucine biosynthesis; L-isoleucine from 2-oxobutanoate: step 3/4. It functions in the pathway amino-acid biosynthesis; L-valine biosynthesis; L-valine from pyruvate: step 3/4. Its function is as follows. Functions in the biosynthesis of branched-chain amino acids. Catalyzes the dehydration of (2R,3R)-2,3-dihydroxy-3-methylpentanoate (2,3-dihydroxy-3-methylvalerate) into 2-oxo-3-methylpentanoate (2-oxo-3-methylvalerate) and of (2R)-2,3-dihydroxy-3-methylbutanoate (2,3-dihydroxyisovalerate) into 2-oxo-3-methylbutanoate (2-oxoisovalerate), the penultimate precursor to L-isoleucine and L-valine, respectively. This is Dihydroxy-acid dehydratase from Bacillus mycoides (strain KBAB4) (Bacillus weihenstephanensis).